The chain runs to 80 residues: MAKSATIVTLFFAALVFFAALEAPMVVEAQKLCERPSGTWSGVCGNSNACKNQCINLEKARHGSCNYVFPAHKCICYFPC.

The first 29 residues, 1 to 29 (MAKSATIVTLFFAALVFFAALEAPMVVEA), serve as a signal peptide directing secretion. Glutamine 30 bears the Pyrrolidone carboxylic acid mark. Cystine bridges form between cysteine 33-cysteine 80, cysteine 44-cysteine 65, cysteine 50-cysteine 74, and cysteine 54-cysteine 76.

Belongs to the DEFL family. As to quaternary structure, forms oligomers in its native state. In terms of tissue distribution, expressed predominantly in siliques and dry seeds.

It localises to the secreted. In terms of biological role, confers broad-spectrum resistance to pathogens. Possesses antifungal activity sensitive to inorganic cations in vitro. This Arabidopsis thaliana (Mouse-ear cress) protein is Defensin-like protein 13 (PDF1.1).